A 61-amino-acid chain; its full sequence is Metallothionein-1 (61 aa).

Met1 is subject to N-acetylmethionine. The beta stretch occupies residues 1-29 (MDPNCSCSTGGSCTCTSSCACKNCKCTSC). Positions 5, 7, 13, 15, 19, 21, 24, 26, 29, 33, 34, 36, 37, 41, 44, 48, 50, 57, 59, and 60 each coordinate a divalent metal cation. Residues 30–61 (KKSCCSCCPVGCSKCAQGCVCKGAADKCTCCA) form an alpha region.

The protein belongs to the metallothionein superfamily. Type 1 family.

Metallothioneins have a high content of cysteine residues that bind various heavy metals; these proteins are transcriptionally regulated by both heavy metals and glucocorticoids. This chain is Metallothionein-1 (Mt1), found in Mus musculus (Mouse).